The following is a 464-amino-acid chain: Tryprostatin B synthase (464 aa).

Brevianamide F is bound by residues Met94 and Glu102. Dimethylallyl diphosphate-binding residues include Arg113, Lys201, and Tyr203. Residue Tyr205 coordinates brevianamide F. Residues Lys294, Tyr296, Gln380, Tyr382, Tyr446, and Tyr450 each coordinate dimethylallyl diphosphate.

The protein belongs to the tryptophan dimethylallyltransferase family.

The enzyme catalyses brevianamide F + dimethylallyl diphosphate = tryprostatin B + diphosphate. The protein operates within mycotoxin biosynthesis. Functionally, brevianamide F prenyltransferase; part of the gene cluster that mediates the biosynthesis of fumitremorgins, indole alkaloids that carry not only intriguing chemical structures, but also interesting biological and pharmacological activities. The biosynthesis of fumitremorgin-type alkaloids begins by condensation of the two amino acids L-tryptophan and L-proline to brevianamide F, catalyzed by the non-ribosomal peptide synthetase ftmA. Brevianamide F is then prenylated by the prenyltransferase ftmPT1/ftmB in the presence of dimethylallyl diphosphate, resulting in the formation of tryprostatin B. The three cytochrome P450 monooxygenases, ftmP450-1/ftmC, ftmP450-2/ftmE and ftmP450-3/FtmG, are responsible for the conversion of tryprostatin B to 6-hydroxytryprostatin B, tryprostatin A to fumitremorgin C and fumitremorgin C to 12,13-dihydroxyfumitremorgin C, respectively. The putative methyltransferase ftmMT/ftmD is expected for the conversion of 6-hydroxytryprostatin B to tryprostatin A. FtmPT2/FtmH catalyzes the prenylation of 12,13-dihydroxyfumitre-morgin C in the presence of dimethylallyl diphosphate, resulting in the formation of fumitremorgin B. Fumitremorgin B is further converted to verruculogen by ftmOx1/ftmF via the insertion of an endoperoxide bond between the two prenyl moieties. In some fungal species, verruculogen is further converted to fumitremorgin A, but the enzymes involved in this step have not been identified yet. This chain is Tryprostatin B synthase, found in Aspergillus fumigatus (Neosartorya fumigata).